The following is a 178-amino-acid chain: Small ribosomal subunit protein uS4 (178 aa).

An S4 RNA-binding domain is found at R104 to H166. A disordered region spans residues N158–Q178.

Belongs to the universal ribosomal protein uS4 family. Part of the 30S ribosomal subunit. Contacts protein S5. The interaction surface between S4 and S5 is involved in control of translational fidelity.

Its function is as follows. One of the primary rRNA binding proteins, it binds directly to 16S rRNA where it nucleates assembly of the body of the 30S subunit. Functionally, with S5 and S12 plays an important role in translational accuracy. This chain is Small ribosomal subunit protein uS4, found in Methanococcus maripaludis (strain DSM 14266 / JCM 13030 / NBRC 101832 / S2 / LL).